Here is a 129-residue protein sequence, read N- to C-terminus: Small ribosomal subunit protein uS11 (129 aa).

Belongs to the universal ribosomal protein uS11 family. As to quaternary structure, part of the 30S ribosomal subunit. Interacts with proteins S7 and S18. Binds to IF-3.

Its function is as follows. Located on the platform of the 30S subunit, it bridges several disparate RNA helices of the 16S rRNA. Forms part of the Shine-Dalgarno cleft in the 70S ribosome. This Dinoroseobacter shibae (strain DSM 16493 / NCIMB 14021 / DFL 12) protein is Small ribosomal subunit protein uS11.